A 334-amino-acid chain; its full sequence is Glyceraldehyde-3-phosphate dehydrogenase (334 aa).

Residues 12–13 (TI) and Gly-111 each bind NAD(+). Residue 140–142 (SCN) coordinates D-glyceraldehyde 3-phosphate. Cys-141 acts as the Nucleophile in catalysis. An NAD(+)-binding site is contributed by Arg-167. Residue 192–193 (HG) participates in D-glyceraldehyde 3-phosphate binding. NAD(+) is bound at residue Gln-298.

This sequence belongs to the glyceraldehyde-3-phosphate dehydrogenase family. In terms of assembly, homotetramer.

It is found in the encapsulin nanocompartment. It carries out the reaction D-glyceraldehyde 3-phosphate + phosphate + NADP(+) = (2R)-3-phospho-glyceroyl phosphate + NADPH + H(+). The enzyme catalyses D-glyceraldehyde 3-phosphate + phosphate + NAD(+) = (2R)-3-phospho-glyceroyl phosphate + NADH + H(+). It participates in carbohydrate degradation; glycolysis; pyruvate from D-glyceraldehyde 3-phosphate: step 1/5. Functionally, possible cargo protein of a type 4B encapsulin nanocompartment. Active in the presence of NAD and NADP, prefers NADP. The polypeptide is Glyceraldehyde-3-phosphate dehydrogenase (gap) (Pyrococcus furiosus (strain ATCC 43587 / DSM 3638 / JCM 8422 / Vc1)).